The primary structure comprises 239 residues: Myogenic factor 6 (239 aa).

A disordered region spans residues 28–64 (HLDMSGVSPLYNGNDSPLSPGQDNVPSETGGESSGDE). Residues 38-58 (YNGNDSPLSPGQDNVPSETGG) are compositionally biased toward polar residues. The bHLH domain maps to 96 to 147 (DRRKAATLRERRRLKKINEAFDALKRKTVANPNQRLPKVEILRSAISYIERL). The segment at 155–189 (DEQERSQSGASDTRNDKEQNRPSGGDYRWKKASNT) is disordered.

As to quaternary structure, efficient DNA binding requires dimerization with another bHLH protein.

The protein resides in the nucleus. Involved in muscle differentiation (myogenic factor). Induces fibroblasts to differentiate into myoblasts. Probable sequence specific DNA-binding protein. The protein is Myogenic factor 6 (myf6) of Takifugu rubripes (Japanese pufferfish).